The primary structure comprises 214 residues: Dephospho-CoA kinase (214 aa).

The 200-residue stretch at 3-202 (KIGLTGGIGS…DRWLALAGAA (200 aa)) folds into the DPCK domain. 11–16 (GSGKSR) is a binding site for ATP.

It belongs to the CoaE family.

It localises to the cytoplasm. It catalyses the reaction 3'-dephospho-CoA + ATP = ADP + CoA + H(+). The protein operates within cofactor biosynthesis; coenzyme A biosynthesis; CoA from (R)-pantothenate: step 5/5. Its function is as follows. Catalyzes the phosphorylation of the 3'-hydroxyl group of dephosphocoenzyme A to form coenzyme A. This chain is Dephospho-CoA kinase, found in Bordetella bronchiseptica (strain ATCC BAA-588 / NCTC 13252 / RB50) (Alcaligenes bronchisepticus).